Reading from the N-terminus, the 585-residue chain is METFKRLKMYYWPYRKVFMWSLLAMLLMTAITVVYPIILQITIDEIVLGRQYQLAAWVSLGFIAVMVLKGMATFFHQYLGDMFGIKSVYRLRNGLYEKLQRLSFSYYDNAKTGDLMSRLTADVEGLRFFLSYGLAELIRFGLLVAISLSVMFYYSVPLTLVTIAVLPFLAVAVYRFDKRVHPAFRGIRKSFAKLNTKVQENISGINTVKSLSREDFQISTFNKANAEYRAQYLQTSSIWSAYFPLMEFIGNTCIVALLSYGGYLVMQNQLNPGELVAFFSLVNYMMWPIMNLGFVINMFSQAKASGERLLDILEKEEDITDHPHALHKQKLTGDVHFKNVSLAYGKEQTNALCNVSFEANSGKVIGLLGPTGSGKSSVTQLLTRFYSPVGGMITIDHKPITDYSLKTLRSNIGVVLQESFLFSSTIRSNISYGRPDASMEDVIEAAKRAQAHNFIMELPDGYDTMLGERGMGLSGGQKQRIAIARAICLNPSILILDDATSAVDMQTEHSIQLALKEVMKNRTTFIVAHRISSLKHADEILVFNKGRIRERGTHHELLEKGGYYKKIYDLQYRDVKMINEPHEVG.

6 consecutive transmembrane segments (helical) span residues 18–38, 55–75, 128–148, 150–170, 238–258, and 276–296; these read FMWS…YPII, AAWV…ATFF, FFLS…AISL, VMFY…PFLA, IWSA…VALL, and VAFF…GFVI. The region spanning 18 to 301 is the ABC transmembrane type-1 domain; sequence FMWSLLAMLL…LGFVINMFSQ (284 aa). The ABC transporter domain maps to 335-570; the sequence is VHFKNVSLAY…GGYYKKIYDL (236 aa). 369–376 lines the ATP pocket; sequence GPTGSGKS.

The protein belongs to the ABC transporter superfamily.

It is found in the cell membrane. This is an uncharacterized protein from Bacillus subtilis (strain 168).